We begin with the raw amino-acid sequence, 359 residues long: Small ribosomal subunit biogenesis GTPase RsgA (359 aa).

The CP-type G domain occupies 101 to 259 (KRKGSQAIAS…LMDNPGIREV (159 aa)). Residues 149–152 (NKKD) and 201–209 (GSSGAGKST) each bind GTP. Residues cysteine 284, cysteine 289, histidine 291, and cysteine 297 each coordinate Zn(2+). Residues 331–359 (DPEEARKKKQKDKQMSKALQKRLKDKGRK) form a disordered region. Residues 349 to 359 (LQKRLKDKGRK) are compositionally biased toward basic residues.

This sequence belongs to the TRAFAC class YlqF/YawG GTPase family. RsgA subfamily. As to quaternary structure, monomer. Associates with 30S ribosomal subunit, binds 16S rRNA. The cofactor is Zn(2+).

It is found in the cytoplasm. Functionally, one of several proteins that assist in the late maturation steps of the functional core of the 30S ribosomal subunit. Helps release RbfA from mature subunits. May play a role in the assembly of ribosomal proteins into the subunit. Circularly permuted GTPase that catalyzes slow GTP hydrolysis, GTPase activity is stimulated by the 30S ribosomal subunit. The polypeptide is Small ribosomal subunit biogenesis GTPase RsgA (Leptospira interrogans serogroup Icterohaemorrhagiae serovar copenhageni (strain Fiocruz L1-130)).